The chain runs to 153 residues: FAD synthase (153 aa).

ATP contacts are provided by residues 9 to 10 (TF), 14 to 17 (HPGH), N92, and Y119.

Belongs to the archaeal FAD synthase family. As to quaternary structure, homodimer. The cofactor is a divalent metal cation.

It catalyses the reaction FMN + ATP + H(+) = FAD + diphosphate. Its pathway is cofactor biosynthesis; FAD biosynthesis; FAD from FMN: step 1/1. Catalyzes the transfer of the AMP portion of ATP to flavin mononucleotide (FMN) to produce flavin adenine dinucleotide (FAD) coenzyme. In Methanosphaerula palustris (strain ATCC BAA-1556 / DSM 19958 / E1-9c), this protein is FAD synthase.